Reading from the N-terminus, the 212-residue chain is 3-isopropylmalate dehydratase small subunit (212 aa).

Belongs to the LeuD family. LeuD type 1 subfamily. In terms of assembly, heterodimer of LeuC and LeuD.

It catalyses the reaction (2R,3S)-3-isopropylmalate = (2S)-2-isopropylmalate. It functions in the pathway amino-acid biosynthesis; L-leucine biosynthesis; L-leucine from 3-methyl-2-oxobutanoate: step 2/4. Functionally, catalyzes the isomerization between 2-isopropylmalate and 3-isopropylmalate, via the formation of 2-isopropylmaleate. This chain is 3-isopropylmalate dehydratase small subunit, found in Methylococcus capsulatus (strain ATCC 33009 / NCIMB 11132 / Bath).